The sequence spans 364 residues: D-alanine--D-alanine ligase (364 aa).

An ATP-grasp domain is found at 134–347; that stretch reads RRLACINGLK…YPDLLDELIN (214 aa). 167–222 is a binding site for ATP; sequence ASEFGWPLFVKPCSLGSSVGIHKANNMDELNAAVADALRYDEEILVEEFIVGREIE. Residues D300, E314, and N316 each contribute to the Mg(2+) site.

Belongs to the D-alanine--D-alanine ligase family. The cofactor is Mg(2+). Mn(2+) serves as cofactor.

The protein resides in the cytoplasm. The enzyme catalyses 2 D-alanine + ATP = D-alanyl-D-alanine + ADP + phosphate + H(+). It participates in cell wall biogenesis; peptidoglycan biosynthesis. Its function is as follows. Cell wall formation. The polypeptide is D-alanine--D-alanine ligase (Legionella pneumophila (strain Lens)).